Reading from the N-terminus, the 394-residue chain is Protein maelstrom (394 aa).

A DNA-binding region (HMG box) is located at residues 2-69 (APKKQNGFMM…ARRDKRGSLN (68 aa)). The interval 44-93 (TQQRGPYNSDAKDANAARRDKRGSLNGHGQVDKAQREAAESLMDKAQREA) is disordered. A compositionally biased stretch (basic and acidic residues) spans 73-93 (QVDKAQREAAESLMDKAQREA).

Belongs to the maelstrom family.

Its subcellular location is the cytoplasm. It localises to the nucleus. Its function is as follows. Involved both in the piRNA and miRNA metabolic processes. As a component of the meiotic nuage, plays a central role during oogenesis by repressing transposable elements and preventing their mobilization, which is essential for the germline integrity. Repression of transposable elements is mediated via the piRNA metabolic process, which mediates the repression of transposable elements during meiosis by forming complexes composed of piRNAs and Piwi proteins and governs the repression of transposons. As a nuclear component, it is required for proper differentiation in the germline stem cell (GSC) lineage by repressing microRNA-7 (miR-7), thereby acting as an indirect regulator of bag-of-marbles (Bam). Acts by binding to the promoter of miR-7 gene and repressing its expression; miR-7 repression alleviates the Bam repression by miR-7, thereby allowing differentiation in the germline stem cell (GSC) lineage. This chain is Protein maelstrom (mael), found in Drosophila sechellia (Fruit fly).